A 348-amino-acid polypeptide reads, in one-letter code: Dihydroorotate dehydrogenase (quinone) (348 aa).

Residues 65 to 69 (AGLDK) and T89 contribute to the FMN site. Residue K69 coordinates substrate. 114–118 (NRLGF) serves as a coordination point for substrate. Positions 147 and 180 each coordinate FMN. N180 contributes to the substrate binding site. Residue S183 is the Nucleophile of the active site. Position 185 (N185) interacts with substrate. K225 and T253 together coordinate FMN. 254 to 255 (NT) lines the substrate pocket. FMN is bound by residues G276, G305, and 326-327 (YS).

It belongs to the dihydroorotate dehydrogenase family. Type 2 subfamily. Monomer. It depends on FMN as a cofactor.

Its subcellular location is the cell membrane. The enzyme catalyses (S)-dihydroorotate + a quinone = orotate + a quinol. It participates in pyrimidine metabolism; UMP biosynthesis via de novo pathway; orotate from (S)-dihydroorotate (quinone route): step 1/1. Catalyzes the conversion of dihydroorotate to orotate with quinone as electron acceptor. In Delftia acidovorans (strain DSM 14801 / SPH-1), this protein is Dihydroorotate dehydrogenase (quinone).